Reading from the N-terminus, the 414-residue chain is uncharacterized protein (414 aa).

The N-terminal stretch at methionine 1 to alanine 18 is a signal peptide.

This is an uncharacterized protein from Aquifex aeolicus (strain VF5).